Reading from the N-terminus, the 418-residue chain is Cell division protein FtsZ (418 aa).

GTP is bound by residues 27–31 (GGGSN), 114–116 (GTG), Glu-145, Lys-149, and Asp-193. Residues 386–418 (KNGVKGHTFGVPLPSVNEDLDEPTFLRNRNKGL) form a disordered region.

This sequence belongs to the FtsZ family. Homodimer. Polymerizes to form a dynamic ring structure in a strictly GTP-dependent manner. Interacts directly with several other division proteins.

It localises to the cytoplasm. Functionally, essential cell division protein that forms a contractile ring structure (Z ring) at the future cell division site. The regulation of the ring assembly controls the timing and the location of cell division. One of the functions of the FtsZ ring is to recruit other cell division proteins to the septum to produce a new cell wall between the dividing cells. Binds GTP and shows GTPase activity. The polypeptide is Cell division protein FtsZ (Treponema pallidum (strain Nichols)).